The sequence spans 409 residues: uncharacterized protein (409 aa).

The next 10 helical transmembrane spans lie at 22-42 (ILII…VIPA), 58-78 (LGII…VVGW), 99-119 (GILG…VFFI), 174-194 (FGAV…MYIA), 217-237 (NTAI…LIFA), 266-286 (SYIF…GPLA), 293-312 (FVIL…LPFA), 316-338 (LAYG…TVVY), 353-373 (LTVG…GALI), and 378-398 (LTPT…AFLL).

The protein belongs to the major facilitator superfamily.

The protein resides in the cell membrane. This is an uncharacterized protein from Bacillus subtilis (strain 168).